A 292-amino-acid polypeptide reads, in one-letter code: Large ribosomal subunit protein bL19m (292 aa).

The segment at 40–61 (PVRQQSTGPSEPGAFQPPPKPV) is disordered. Ser77 carries the post-translational modification Phosphoserine.

This sequence belongs to the bacterial ribosomal protein bL19 family. In terms of assembly, component of the mitochondrial ribosome large subunit (39S) which comprises a 16S rRNA and about 50 distinct proteins.

It is found in the mitochondrion. The protein is Large ribosomal subunit protein bL19m (MRPL19) of Pongo abelii (Sumatran orangutan).